A 157-amino-acid chain; its full sequence is Large ribosomal subunit protein uL15 (157 aa).

A disordered region spans residues 1–64 (MKLNEIPAVP…MPLQRRLPKR (64 aa)). The span at 21–31 (RGPGSGNGKTA) shows a compositional bias: gly residues.

Belongs to the universal ribosomal protein uL15 family. As to quaternary structure, part of the 50S ribosomal subunit.

Functionally, binds to the 23S rRNA. The chain is Large ribosomal subunit protein uL15 from Magnetococcus marinus (strain ATCC BAA-1437 / JCM 17883 / MC-1).